The chain runs to 211 residues: Protein-L-isoaspartate O-methyltransferase 2 (211 aa).

Serine 61 is an active-site residue.

Belongs to the methyltransferase superfamily. L-isoaspartyl/D-aspartyl protein methyltransferase family.

The protein localises to the cytoplasm. The enzyme catalyses [protein]-L-isoaspartate + S-adenosyl-L-methionine = [protein]-L-isoaspartate alpha-methyl ester + S-adenosyl-L-homocysteine. Its function is as follows. Catalyzes the methyl esterification of L-isoaspartyl residues in peptides and proteins that result from spontaneous decomposition of normal L-aspartyl and L-asparaginyl residues. It plays a role in the repair and/or degradation of damaged proteins. The chain is Protein-L-isoaspartate O-methyltransferase 2 from Polaromonas sp. (strain JS666 / ATCC BAA-500).